The primary structure comprises 348 residues: Phosphoribosylformylglycinamidine cyclo-ligase (348 aa).

It belongs to the AIR synthase family.

It localises to the cytoplasm. It catalyses the reaction 2-formamido-N(1)-(5-O-phospho-beta-D-ribosyl)acetamidine + ATP = 5-amino-1-(5-phospho-beta-D-ribosyl)imidazole + ADP + phosphate + H(+). The protein operates within purine metabolism; IMP biosynthesis via de novo pathway; 5-amino-1-(5-phospho-D-ribosyl)imidazole from N(2)-formyl-N(1)-(5-phospho-D-ribosyl)glycinamide: step 2/2. This Ruegeria pomeroyi (strain ATCC 700808 / DSM 15171 / DSS-3) (Silicibacter pomeroyi) protein is Phosphoribosylformylglycinamidine cyclo-ligase.